We begin with the raw amino-acid sequence, 366 residues long: RNA 3'-terminal phosphate cyclase (366 aa).

Residues Gln-104, Pro-131, Tyr-294, Asp-297, Gln-298, and His-320 each coordinate ATP. His-320 serves as the catalytic Tele-AMP-histidine intermediate.

It belongs to the RNA 3'-terminal cyclase family. Type 1 subfamily.

It is found in the nucleus. It localises to the nucleoplasm. The enzyme catalyses a 3'-end 3'-phospho-ribonucleotide-RNA + ATP = a 3'-end 2',3'-cyclophospho-ribonucleotide-RNA + AMP + diphosphate. In terms of biological role, catalyzes the conversion of 3'-phosphate to a 2',3'-cyclic phosphodiester at the end of RNA. The mechanism of action of the enzyme occurs in 3 steps: (A) adenylation of the enzyme by ATP; (B) transfer of adenylate to an RNA-N3'P to produce RNA-N3'PP5'A; (C) and attack of the adjacent 2'-hydroxyl on the 3'-phosphorus in the diester linkage to produce the cyclic end product. Likely functions in some aspects of cellular RNA processing. Function plays an important role in regulating axon regeneration by inhibiting central nervous system (CNS) axon regeneration following optic nerve injury. The polypeptide is RNA 3'-terminal phosphate cyclase (RTCA) (Macaca fascicularis (Crab-eating macaque)).